We begin with the raw amino-acid sequence, 378 residues long: Chaperone protein DnaJ (378 aa).

The region spanning 5-69 is the J domain; the sequence is DYYEVLGVSK…NKRANYDQFG (65 aa). The CR-type zinc-finger motif lies at 135–217; sequence GSEKEISIRK…CHGKGTENKN (83 aa). Residues Cys-148, Cys-151, Cys-165, Cys-168, Cys-191, Cys-194, Cys-205, and Cys-208 each coordinate Zn(2+). 4 CXXCXGXG motif repeats span residues 148–155, 165–172, 191–198, and 205–212; these read CHTCDGEG, CHYCNGSG, CPVCSGSG, and CPTCHGKG.

The protein belongs to the DnaJ family. As to quaternary structure, homodimer. Zn(2+) serves as cofactor.

It is found in the cytoplasm. In terms of biological role, participates actively in the response to hyperosmotic and heat shock by preventing the aggregation of stress-denatured proteins and by disaggregating proteins, also in an autonomous, DnaK-independent fashion. Unfolded proteins bind initially to DnaJ; upon interaction with the DnaJ-bound protein, DnaK hydrolyzes its bound ATP, resulting in the formation of a stable complex. GrpE releases ADP from DnaK; ATP binding to DnaK triggers the release of the substrate protein, thus completing the reaction cycle. Several rounds of ATP-dependent interactions between DnaJ, DnaK and GrpE are required for fully efficient folding. Also involved, together with DnaK and GrpE, in the DNA replication of plasmids through activation of initiation proteins. The sequence is that of Chaperone protein DnaJ from Staphylococcus saprophyticus subsp. saprophyticus (strain ATCC 15305 / DSM 20229 / NCIMB 8711 / NCTC 7292 / S-41).